The chain runs to 264 residues: Thiazole synthase (264 aa).

The active-site Schiff-base intermediate with DXP is K98. 1-deoxy-D-xylulose 5-phosphate is bound by residues G159, 185-186 (AG), and 207-208 (AT).

It belongs to the ThiG family. As to quaternary structure, homotetramer. Forms heterodimers with either ThiH or ThiS.

The protein localises to the cytoplasm. The catalysed reaction is [ThiS sulfur-carrier protein]-C-terminal-Gly-aminoethanethioate + 2-iminoacetate + 1-deoxy-D-xylulose 5-phosphate = [ThiS sulfur-carrier protein]-C-terminal Gly-Gly + 2-[(2R,5Z)-2-carboxy-4-methylthiazol-5(2H)-ylidene]ethyl phosphate + 2 H2O + H(+). The protein operates within cofactor biosynthesis; thiamine diphosphate biosynthesis. In terms of biological role, catalyzes the rearrangement of 1-deoxy-D-xylulose 5-phosphate (DXP) to produce the thiazole phosphate moiety of thiamine. Sulfur is provided by the thiocarboxylate moiety of the carrier protein ThiS. In vitro, sulfur can be provided by H(2)S. The polypeptide is Thiazole synthase (Mycobacterium ulcerans (strain Agy99)).